Here is a 902-residue protein sequence, read N- to C-terminus: Protein translocase subunit SecA (902 aa).

Residues Gln87, 105-109 (GEGKT), and Asp512 contribute to the ATP site. The interval 836–902 (DVEKVEEQHR…KFKQCCGKLK (67 aa)) is disordered. Residues 840 to 863 (VEEQHRKSENAPREYQHEEVEHVG) are compositionally biased toward basic and acidic residues. Residues Cys886, Cys888, Cys897, and Cys898 each coordinate Zn(2+).

The protein belongs to the SecA family. As to quaternary structure, monomer and homodimer. Part of the essential Sec protein translocation apparatus which comprises SecA, SecYEG and auxiliary proteins SecDF-YajC and YidC. It depends on Zn(2+) as a cofactor.

The protein resides in the cell inner membrane. It localises to the cytoplasm. The enzyme catalyses ATP + H2O + cellular proteinSide 1 = ADP + phosphate + cellular proteinSide 2.. Its function is as follows. Part of the Sec protein translocase complex. Interacts with the SecYEG preprotein conducting channel. Has a central role in coupling the hydrolysis of ATP to the transfer of proteins into and across the cell membrane, serving both as a receptor for the preprotein-SecB complex and as an ATP-driven molecular motor driving the stepwise translocation of polypeptide chains across the membrane. The sequence is that of Protein translocase subunit SecA from Pseudoalteromonas translucida (strain TAC 125).